A 281-amino-acid polypeptide reads, in one-letter code: Protein phosphatase 2C homolog 1 (281 aa).

Positions 20–281 (RVGVAENKNS…DNVTVMVVFL (262 aa)) constitute a PPM-type phosphatase domain. Residues Asp-58, Gly-59, Asp-233, and Asp-272 each contribute to the Mn(2+) site.

It belongs to the PP2C family. In terms of assembly, interacts with NBP2 and PBS2. Requires Mg(2+) as cofactor. Mn(2+) is required as a cofactor.

Its subcellular location is the peroxisome. It catalyses the reaction O-phospho-L-seryl-[protein] + H2O = L-seryl-[protein] + phosphate. The catalysed reaction is O-phospho-L-threonyl-[protein] + H2O = L-threonyl-[protein] + phosphate. Its function is as follows. Serine and threonine phosphatase. Involved in tRNA splicing and cell separation. The sequence is that of Protein phosphatase 2C homolog 1 (PTC1) from Saccharomyces cerevisiae (strain ATCC 204508 / S288c) (Baker's yeast).